The following is a 444-amino-acid chain: N-succinylarginine dihydrolase (444 aa).

Residues 19–28 (SGLSVGNIAS), Asn-110, and 137–138 (HR) each bind substrate. Glu-174 is an active-site residue. Substrate is bound at residue Arg-214. His-250 is an active-site residue. Asp-252 and Asn-362 together coordinate substrate. Cys-368 acts as the Nucleophile in catalysis.

The protein belongs to the succinylarginine dihydrolase family. In terms of assembly, homodimer.

It catalyses the reaction N(2)-succinyl-L-arginine + 2 H2O + 2 H(+) = N(2)-succinyl-L-ornithine + 2 NH4(+) + CO2. Its pathway is amino-acid degradation; L-arginine degradation via AST pathway; L-glutamate and succinate from L-arginine: step 2/5. Catalyzes the hydrolysis of N(2)-succinylarginine into N(2)-succinylornithine, ammonia and CO(2). The polypeptide is N-succinylarginine dihydrolase (Aliivibrio fischeri (strain ATCC 700601 / ES114) (Vibrio fischeri)).